Here is a 284-residue protein sequence, read N- to C-terminus: Shikimate dehydrogenase (NADP(+)) (284 aa).

Shikimate is bound by residues 19–21 (SFS) and Thr66. Catalysis depends on Lys70, which acts as the Proton acceptor. Residue Asp82 participates in NADP(+) binding. Shikimate contacts are provided by Asn91 and Asp106. NADP(+)-binding positions include 130 to 134 (GSGGS) and Ile226. Tyr228 is a binding site for shikimate. Residue Gly249 participates in NADP(+) binding.

Belongs to the shikimate dehydrogenase family. As to quaternary structure, homodimer.

The enzyme catalyses shikimate + NADP(+) = 3-dehydroshikimate + NADPH + H(+). It participates in metabolic intermediate biosynthesis; chorismate biosynthesis; chorismate from D-erythrose 4-phosphate and phosphoenolpyruvate: step 4/7. Involved in the biosynthesis of the chorismate, which leads to the biosynthesis of aromatic amino acids. Catalyzes the reversible NADPH linked reduction of 3-dehydroshikimate (DHSA) to yield shikimate (SA). The sequence is that of Shikimate dehydrogenase (NADP(+)) from Methanococcus vannielii (strain ATCC 35089 / DSM 1224 / JCM 13029 / OCM 148 / SB).